The sequence spans 367 residues: NADH-quinone oxidoreductase subunit D (367 aa).

This sequence belongs to the complex I 49 kDa subunit family. NDH-1 is composed of 14 different subunits. Subunits NuoB, C, D, E, F, and G constitute the peripheral sector of the complex.

The protein resides in the cell inner membrane. It carries out the reaction a quinone + NADH + 5 H(+)(in) = a quinol + NAD(+) + 4 H(+)(out). Functionally, NDH-1 shuttles electrons from NADH, via FMN and iron-sulfur (Fe-S) centers, to quinones in the respiratory chain. The immediate electron acceptor for the enzyme in this species is believed to be ubiquinone. Couples the redox reaction to proton translocation (for every two electrons transferred, four hydrogen ions are translocated across the cytoplasmic membrane), and thus conserves the redox energy in a proton gradient. This chain is NADH-quinone oxidoreductase subunit D, found in Thermosipho melanesiensis (strain DSM 12029 / CIP 104789 / BI429).